We begin with the raw amino-acid sequence, 941 residues long: Endoglucanase (941 aa).

Positions 1–29 (MKIKQIKQSLSLLLIITLIMSLFVPMASA) are cleaved as a signal peptide. SLH domains are found at residues 37–94 (NAFP…GLEA), 95–158 (SSKD…LSLP), and 161–224 (QREY…DYLY). Glu-373 functions as the Proton donor in the catalytic mechanism. The Nucleophile role is filled by Glu-485.

This sequence belongs to the glycosyl hydrolase 5 (cellulase A) family.

It catalyses the reaction Endohydrolysis of (1-&gt;4)-beta-D-glucosidic linkages in cellulose, lichenin and cereal beta-D-glucans.. The chain is Endoglucanase from Bacillus sp. (strain KSM-635).